A 297-amino-acid chain; its full sequence is N-acetylmuramic acid 6-phosphate etherase (297 aa).

The SIS domain occupies 55–218; that stretch reads AAAALTRGGR…STGAMVKCGK (164 aa). E83 acts as the Proton donor in catalysis. E114 is a catalytic residue.

This sequence belongs to the GCKR-like family. MurNAc-6-P etherase subfamily. In terms of assembly, homodimer.

The enzyme catalyses N-acetyl-D-muramate 6-phosphate + H2O = N-acetyl-D-glucosamine 6-phosphate + (R)-lactate. It participates in amino-sugar metabolism; 1,6-anhydro-N-acetylmuramate degradation. It functions in the pathway amino-sugar metabolism; N-acetylmuramate degradation. Its pathway is cell wall biogenesis; peptidoglycan recycling. Functionally, specifically catalyzes the cleavage of the D-lactyl ether substituent of MurNAc 6-phosphate, producing GlcNAc 6-phosphate and D-lactate. Together with AnmK, is also required for the utilization of anhydro-N-acetylmuramic acid (anhMurNAc) either imported from the medium or derived from its own cell wall murein, and thus plays a role in cell wall recycling. The sequence is that of N-acetylmuramic acid 6-phosphate etherase from Cronobacter sakazakii (strain ATCC BAA-894) (Enterobacter sakazakii).